The chain runs to 181 residues: MFKKFDEKESVSNCIQLKTSVIKGIKSQLTEQFPGIEPWLNQIMPKKDPVKIVRCHEHMEILTVNGELLFFRQRKGPFYPTLRLLHKYPFILPHQQVDKGAIKFVLSGANIMCPGLTSPGAKLYTAAVDTIVAVMAEGKEHALCVGVMKMAAADIEKINKGIGIENIHYLNDGLWHMKTYK.

A PUA domain is found at 92–171 (LPHQQVDKGA…IGIENIHYLN (80 aa)).

It belongs to the MCTS1 family.

The protein localises to the cytoplasm. The polypeptide is Malignant T-cell-amplified sequence 2 (Mus musculus (Mouse)).